The following is a 334-amino-acid chain: Adenosine deaminase (334 aa).

Positions 12 and 14 each coordinate Zn(2+). Substrate contacts are provided by histidine 14, aspartate 16, and glycine 170. Position 197 (histidine 197) interacts with Zn(2+). Glutamate 200 acts as the Proton donor in catalysis. Aspartate 278 contributes to the Zn(2+) binding site. Aspartate 279 contacts substrate.

This sequence belongs to the metallo-dependent hydrolases superfamily. Adenosine and AMP deaminases family. Adenosine deaminase subfamily. Zn(2+) is required as a cofactor.

It catalyses the reaction adenosine + H2O + H(+) = inosine + NH4(+). The enzyme catalyses 2'-deoxyadenosine + H2O + H(+) = 2'-deoxyinosine + NH4(+). Catalyzes the hydrolytic deamination of adenosine and 2-deoxyadenosine. The protein is Adenosine deaminase of Vibrio parahaemolyticus serotype O3:K6 (strain RIMD 2210633).